A 453-amino-acid polypeptide reads, in one-letter code: Gamma-aminobutyric acid receptor subunit alpha-6 (453 aa).

The N-terminal stretch at 1 to 19 is a signal peptide; the sequence is MVLLLPWLFIILWLENAQA. The Extracellular portion of the chain corresponds to 20-243; sequence QLEDEGNFYS…FHLQRKMGYF (224 aa). The N-linked (GlcNAc...) asparagine glycan is linked to asparagine 31. Position 84 (arginine 84) interacts with 4-aminobutanoate. N-linked (GlcNAc...) asparagine glycans are attached at residues asparagine 128 and asparagine 141. Residue threonine 147 participates in 4-aminobutanoate binding. A disulfide bond links cysteine 156 and cysteine 170. A helical transmembrane segment spans residues 244–264; sequence MIQIYTPCIMTVILSQVSFWI. The Cytoplasmic segment spans residues 265 to 270; sequence NKESVP. A helical transmembrane segment spans residues 271–290; sequence ARTVFGITTVLTMTTLSISA. At 291 to 304 the chain is on the extracellular side; it reads RHSLPKVSYATAMD. Residues 305–325 form a helical membrane-spanning segment; it reads WFIAVCFAFVFSALIEFAAVN. Residues 326-422 lie on the Cytoplasmic side of the membrane; the sequence is YFTNLQSQKA…GTSKIDQYSR (97 aa). A Phosphoserine modification is found at serine 375. Residues 423-443 form a helical membrane-spanning segment; it reads ILFPVAFAGFNLVYWIVYLSK. Residues 444–453 lie on the Extracellular side of the membrane; that stretch reads DTMEVSSTVE.

The protein belongs to the ligand-gated ion channel (TC 1.A.9) family. Gamma-aminobutyric acid receptor (TC 1.A.9.5) subfamily. GABRA6 sub-subfamily. As to quaternary structure, heteropentamer, formed by a combination of alpha (GABRA1-6), beta (GABRB1-3), gamma (GABRG1-3), delta (GABRD), epsilon (GABRE), rho (GABRR1-3), pi (GABRP) and theta (GABRQ) chains, each subunit exhibiting distinct physiological and pharmacological properties. Binds UBQLN1. In terms of tissue distribution, expressed in brain, in cerebellar granule cells.

The protein resides in the postsynaptic cell membrane. The protein localises to the cell membrane. The catalysed reaction is chloride(in) = chloride(out). In terms of biological role, alpha subunit of the heteropentameric ligand-gated chloride channel gated by gamma-aminobutyric acid (GABA), a major inhibitory neurotransmitter in the brain. GABA-gated chloride channels, also named GABA(A) receptors (GABAAR), consist of five subunits arranged around a central pore and contain GABA active binding site(s) located at the alpha and beta subunit interface(s). When activated by GABA, GABAARs selectively allow the flow of chloride anions across the cell membrane down their electrochemical gradient. Alpha-6/GABRA6 subunits are found at both synaptic and extrasynaptic sites. Chloride influx into the postsynaptic neuron following GABAAR opening decreases the neuron ability to generate a new action potential, thereby reducing nerve transmission. Extrasynaptic alpha-6-containing receptors contribute to the tonic GABAergic inhibition. Alpha-6 subunits are also present on glutamatergic synapses. This chain is Gamma-aminobutyric acid receptor subunit alpha-6, found in Mus musculus (Mouse).